A 471-amino-acid chain; its full sequence is MKKTLYEKIYDAHIVHEEKNNASILYIDLHLLHEVTSPQAFDSLRIKNRVVRQPKKTFATMDHNVSTESKDINASGSMAKIQMQQLIRNCNQFNISLYDLNNPKQGIVHVIGPEQGMTLPGMTIVCGDSHTSTHGAFGALSFGIGTSEVEHVLVTQTLKQQRLKNMKIQIKGKIKNFVTAKDIILFIIGKLGTSGGSGYVIEFCGDVIKKMNMEERMTVCNMAIEMGAKSALIAPDETTFLYLKGRRYSPQGKFWEEAVKYWKTLITRSKAFFDKEFTFDVSNLSPQITWGTSPDQVLSINEKIPDFNFFKDSVKKNLARSACDYMNLKPGSYLTDIKIDKVFIGSCTNSRIEDLRSAAKILKNKKISKNIKAILLPGSGTGTVKKPAEKEGLDKIFIDAGFEWRLPGCSMCLGMNNDKLSDGERCASTSNRNFEGRQGRGGRTHLVSPIMAAAAIYGRFIDVRNLDSETN.

[4Fe-4S] cluster-binding residues include Cys347, Cys409, and Cys412.

It belongs to the aconitase/IPM isomerase family. LeuC type 1 subfamily. Heterodimer of LeuC and LeuD. Requires [4Fe-4S] cluster as cofactor.

It carries out the reaction (2R,3S)-3-isopropylmalate = (2S)-2-isopropylmalate. Its pathway is amino-acid biosynthesis; L-leucine biosynthesis; L-leucine from 3-methyl-2-oxobutanoate: step 2/4. Functionally, catalyzes the isomerization between 2-isopropylmalate and 3-isopropylmalate, via the formation of 2-isopropylmaleate. The polypeptide is 3-isopropylmalate dehydratase large subunit (Buchnera aphidicola subsp. Rhopalosiphum padi).